The chain runs to 122 residues: Autophagy-related protein 8b (122 aa).

Glycine 117 is lipidated: Phosphatidylethanolamine amidated glycine. The propeptide at 118-122 (GSFYC) is removed in mature form.

It belongs to the ATG8 family. As to quaternary structure, interacts with ATG4. Interacts with NBR1. Post-translationally, the C-terminal 5 residues are removed by ATG4 to expose Gly-117 at the C-terminus. This Gly-117 forms then a thioester bond with the 'Cys-558' of ATG7 (E1-like activating enzyme) before being transferred to the 'Cys-258' of ATG3 (the specific E2 conjugating enzyme), in order to be finally amidated with phosphatidylethanolamine. This lipid modification anchors ATG8 to autophagosomes. Constitutively expressed.

Its subcellular location is the cytoplasmic vesicle. The protein localises to the autophagosome membrane. It is found in the vacuole membrane. It localises to the cytoplasm. The protein resides in the cytoskeleton. Ubiquitin-like modifier involved in autophagosomes formation. May mediate the delivery of the autophagosomes to the vacuole via the microtubule cytoskeleton. The sequence is that of Autophagy-related protein 8b (ATG8B) from Arabidopsis thaliana (Mouse-ear cress).